The primary structure comprises 217 residues: Probable transaldolase (217 aa).

The active-site Schiff-base intermediate with substrate is the Lys-83.

The protein belongs to the transaldolase family. Type 3B subfamily.

The protein resides in the cytoplasm. It carries out the reaction D-sedoheptulose 7-phosphate + D-glyceraldehyde 3-phosphate = D-erythrose 4-phosphate + beta-D-fructose 6-phosphate. It functions in the pathway carbohydrate degradation; pentose phosphate pathway; D-glyceraldehyde 3-phosphate and beta-D-fructose 6-phosphate from D-ribose 5-phosphate and D-xylulose 5-phosphate (non-oxidative stage): step 2/3. Transaldolase is important for the balance of metabolites in the pentose-phosphate pathway. The sequence is that of Probable transaldolase from Bartonella tribocorum (strain CIP 105476 / IBS 506).